A 208-amino-acid chain; its full sequence is Thymidylate kinase (208 aa).

ATP is bound at residue 10–17 (GLEGAGKS).

This sequence belongs to the thymidylate kinase family.

It carries out the reaction dTMP + ATP = dTDP + ADP. In terms of biological role, phosphorylation of dTMP to form dTDP in both de novo and salvage pathways of dTTP synthesis. This chain is Thymidylate kinase, found in Pseudoalteromonas translucida (strain TAC 125).